A 740-amino-acid chain; its full sequence is ATP-dependent zinc metalloprotease YME1L (740 aa).

Topologically, residues 1–256 (MFSTTTHSVP…KSGKTMKYLK (256 aa)) are mitochondrial matrix. A helical transmembrane segment spans residues 257-277 (TLQTIVVIVVFLGIFLSFFTT). The Mitochondrial intermembrane segment spans residues 278 to 740 (SNGSVFRSIQ…IKAILNESQT (463 aa)). 347–351 (GTGKT) is a binding site for ATP. A Zn(2+)-binding site is contributed by His563. Glu564 is an active-site residue. 2 residues coordinate Zn(2+): His567 and Asp641.

The protein in the N-terminal section; belongs to the AAA ATPase family. This sequence in the C-terminal section; belongs to the peptidase M41 family. Zn(2+) serves as cofactor.

The protein resides in the mitochondrion inner membrane. Functionally, ATP-dependent metalloprotease that catalyzes the degradation of folded and unfolded proteins with a suitable degron sequence in the mitochondrial intermembrane region. Plays an important role in regulating mitochondrial morphology and function by cleaving Opa1, giving rise to a form of Opa1 that promotes maintenance of normal mitochondrial structure and mitochondrial protein metabolism. Ensures cell proliferation, maintains normal cristae morphology and complex I respiration activity, promotes antiapoptotic activity and protects mitochondria from the accumulation of oxidatively damaged membrane proteins. Required to control the accumulation of nonassembled respiratory chain subunits such as ND-30. This Drosophila melanogaster (Fruit fly) protein is ATP-dependent zinc metalloprotease YME1L.